Consider the following 142-residue polypeptide: Ribosome-binding factor A (142 aa).

The segment at 118-142 is disordered; it reads DKNGDAEVDDTQVDDEPSVDSEKGE. Acidic residues predominate over residues 123 to 136; the sequence is AEVDDTQVDDEPSV.

This sequence belongs to the RbfA family. As to quaternary structure, monomer. Binds 30S ribosomal subunits, but not 50S ribosomal subunits or 70S ribosomes.

It is found in the cytoplasm. Functionally, one of several proteins that assist in the late maturation steps of the functional core of the 30S ribosomal subunit. Associates with free 30S ribosomal subunits (but not with 30S subunits that are part of 70S ribosomes or polysomes). Required for efficient processing of 16S rRNA. May interact with the 5'-terminal helix region of 16S rRNA. In Colwellia psychrerythraea (strain 34H / ATCC BAA-681) (Vibrio psychroerythus), this protein is Ribosome-binding factor A.